The primary structure comprises 667 residues: Protein angel homolog 1 (667 aa).

Phosphoserine is present on residues S77 and S105.

It belongs to the CCR4/nocturin family.

In Rattus norvegicus (Rat), this protein is Protein angel homolog 1.